Here is a 214-residue protein sequence, read N- to C-terminus: Pyridoxine/pyridoxamine 5'-phosphate oxidase (214 aa).

Substrate-binding positions include 8–11 (RINY) and K66. FMN contacts are provided by residues 61-66 (RIVLIK), 76-77 (FT), R82, K83, and Q105. Positions 123, 127, and 131 each coordinate substrate. FMN-binding positions include 140–141 (QS) and W184. 190–192 (RLH) lines the substrate pocket. R194 provides a ligand contact to FMN.

The protein belongs to the pyridoxamine 5'-phosphate oxidase family. As to quaternary structure, homodimer. FMN is required as a cofactor.

The enzyme catalyses pyridoxamine 5'-phosphate + O2 + H2O = pyridoxal 5'-phosphate + H2O2 + NH4(+). The catalysed reaction is pyridoxine 5'-phosphate + O2 = pyridoxal 5'-phosphate + H2O2. It participates in cofactor metabolism; pyridoxal 5'-phosphate salvage; pyridoxal 5'-phosphate from pyridoxamine 5'-phosphate: step 1/1. The protein operates within cofactor metabolism; pyridoxal 5'-phosphate salvage; pyridoxal 5'-phosphate from pyridoxine 5'-phosphate: step 1/1. Functionally, catalyzes the oxidation of either pyridoxine 5'-phosphate (PNP) or pyridoxamine 5'-phosphate (PMP) into pyridoxal 5'-phosphate (PLP). In Burkholderia orbicola (strain MC0-3), this protein is Pyridoxine/pyridoxamine 5'-phosphate oxidase.